The following is a 502-amino-acid chain: Maturase K (502 aa).

It belongs to the intron maturase 2 family. MatK subfamily.

The protein localises to the plastid. Its subcellular location is the chloroplast. In terms of biological role, usually encoded in the trnK tRNA gene intron. Probably assists in splicing its own and other chloroplast group II introns. In Spiraea cantoniensis (Reeve's meadowsweet), this protein is Maturase K.